Here is a 123-residue protein sequence, read N- to C-terminus: Holo-[acyl-carrier-protein] synthase (123 aa).

2 residues coordinate Mg(2+): Asp9 and Glu57.

It belongs to the P-Pant transferase superfamily. AcpS family. Mg(2+) is required as a cofactor.

The protein localises to the cytoplasm. The catalysed reaction is apo-[ACP] + CoA = holo-[ACP] + adenosine 3',5'-bisphosphate + H(+). In terms of biological role, transfers the 4'-phosphopantetheine moiety from coenzyme A to a Ser of acyl-carrier-protein. This chain is Holo-[acyl-carrier-protein] synthase, found in Streptomyces coelicolor (strain ATCC BAA-471 / A3(2) / M145).